The sequence spans 463 residues: Cysteine--tRNA ligase (463 aa).

Zn(2+) is bound at residue cysteine 29. Positions 31–41 match the 'HIGH' region motif; the sequence is ATPQTQPHIGH. The Zn(2+) site is built by cysteine 212, histidine 237, and glutamate 241. The short motif at 268–272 is the 'KMSKS' region element; that stretch reads KMSKS. Lysine 271 contributes to the ATP binding site.

It belongs to the class-I aminoacyl-tRNA synthetase family. Monomer. Zn(2+) is required as a cofactor.

It is found in the cytoplasm. The catalysed reaction is tRNA(Cys) + L-cysteine + ATP = L-cysteinyl-tRNA(Cys) + AMP + diphosphate. The polypeptide is Cysteine--tRNA ligase (Corynebacterium diphtheriae (strain ATCC 700971 / NCTC 13129 / Biotype gravis)).